The sequence spans 428 residues: CRISPR system endoribonuclease Csm6 (428 aa).

A CARF domain region spans residues 1–145; it reads MKILISAVGT…RANREYTALT (145 aa). The tract at residues 146–428 is HEPN domain; sequence ESEIDALIME…QNKELIKMLE (283 aa).

It belongs to the CRISPR-associated Csm6 family. Homodimer. The composite ssRNase active site is formed at the dimer interface.

Non-specific ssRNase activity is allosterically activated about 1000-fold by cyclic hexaadenylate (cA6), a second messenger produced by Cas10 of the ternary Csm effector complex in the presence of a cognate target RNA. ssRNase activity is inhibited by physiological concentrations of ATP (1 mM), activity is restored by cOA. Its function is as follows. CRISPR (clustered regularly interspaced short palindromic repeat) is an adaptive immune system that provides protection against mobile genetic elements (viruses, transposable elements and conjugative plasmids). CRISPR clusters contain spacers, sequences complementary to antecedent mobile elements, and target invading nucleic acids. CRISPR clusters are transcribed and processed into CRISPR RNA (crRNA). The type III-A Csm complex binds crRNA and acts as a crRNA-guided RNase, DNase and cyclic oligoadenylate synthase; binding of target RNA cognate to the crRNA is required for all activities. In a heterologous host this Csm effector complex restricts ssRNA phage MS2, suggesting it may target RNA viruses in vivo. This protein is not part of the Csm complex. Functionally, csm functions as a non-specific ssDNase. Base-pairing between crRNA and target RNA to form a ternary Csm complex activates a ssDNase activity; target RNA cleavage suppresses the ssDNase, a temporal control that prevents uncontrolled DNA degradation. Viral RNA transcripts probably tether the Csm complex to the viral genome, recruiting Cas10 ssDNA activity which is able to degrade DNA in the transcription bubble, spatially controlling the DNase activity. In terms of biological role, a single-strand-specific endoribonuclease (ssRNase) that is approximately 1000-fold stimulated by cyclic oligoadenylate (cOA); although several species of cOA are synthesized by this organism only cyclic hexaadenylate (cA6) stimulates the ssRNase activity. Cleaves preferentially within GA or AA dinucleotides, although the presence of cA6 broadens the preference. Linear oligoadenylates do not activate the RNase. The protein is CRISPR system endoribonuclease Csm6 of Streptococcus thermophilus.